The primary structure comprises 527 residues: MHDKILILDFGSQVTQLIARRVREANVYSEIHPYDVDASFIRDFAPKGVILSGGPSSVTETDTPRVPQAVFELGVPVLGICYGMQAMAEQLGGKVDIGHLREFGYAEVRARNHTSLLEGIKDFTTPEGHGMLKVWMSHGDKVLEMPPGFALMASTESCPIAAMADEKRHFYGLQWHPEVTHTVQGRAMLERFVLQICGARADWEMGNYIDEAVAKIREQVGNEHVILGLSGGVDSSVAAALLHRAIGDQLTCVFVDHGLLRLNEAEQVMATFADHLGVKVIHVDASEVFLRKLAGVTDPEAKRKIIGAEFVEVFQAEAGRLTDAKWLAQGTIYPDVIESAGKGKKGAQTIKSHHNVGGLPETLNLKLLEPLRELFKDEVRELGVKLGLPPAMVYRHPFPGPGLGVRILGEVKRDFADLLRRADAIFIETLRTFIDKETGKSWYDLTSQAFAVFLPVKSVGVMGDGRTYEYVVALRAVQTLDFMTAHWAHLPHELLGHVSNRIINEVRGINRVVYDISGKPPATIEWE.

The Glutamine amidotransferase type-1 domain maps to K4–D202. C81 serves as the catalytic Nucleophile. Catalysis depends on residues H176 and E178. The GMPS ATP-PPase domain maps to W203–R395. An ATP-binding site is contributed by S230–S236.

Homodimer.

The catalysed reaction is XMP + L-glutamine + ATP + H2O = GMP + L-glutamate + AMP + diphosphate + 2 H(+). The protein operates within purine metabolism; GMP biosynthesis; GMP from XMP (L-Gln route): step 1/1. Catalyzes the synthesis of GMP from XMP. This is GMP synthase [glutamine-hydrolyzing] from Paraburkholderia phytofirmans (strain DSM 17436 / LMG 22146 / PsJN) (Burkholderia phytofirmans).